The chain runs to 223 residues: DNA mismatch repair protein MutH (223 aa).

This sequence belongs to the MutH family.

The protein resides in the cytoplasm. Functionally, sequence-specific endonuclease that cleaves unmethylated GATC sequences. It is involved in DNA mismatch repair. The protein is DNA mismatch repair protein MutH of Shewanella baltica (strain OS223).